An 87-amino-acid chain; its full sequence is Small ribosomal subunit protein uS17 (87 aa).

Belongs to the universal ribosomal protein uS17 family. As to quaternary structure, part of the 30S ribosomal subunit.

In terms of biological role, one of the primary rRNA binding proteins, it binds specifically to the 5'-end of 16S ribosomal RNA. The polypeptide is Small ribosomal subunit protein uS17 (Bacillus subtilis (strain 168)).